The primary structure comprises 120 residues: NAD(P)H-quinone oxidoreductase subunit 3 (120 aa).

Transmembrane regions (helical) follow at residues 10–32, 64–84, and 89–109; these read LLGFLLLCSLVPALALSASKVLR, MFALVFVIFDVETVFLYPWAV, and LGVLAFIEALIFIAILIVGLV.

It belongs to the complex I subunit 3 family. In terms of assembly, NDH-1 can be composed of about 15 different subunits; different subcomplexes with different compositions have been identified which probably have different functions.

The protein localises to the cellular thylakoid membrane. It catalyses the reaction a plastoquinone + NADH + (n+1) H(+)(in) = a plastoquinol + NAD(+) + n H(+)(out). It carries out the reaction a plastoquinone + NADPH + (n+1) H(+)(in) = a plastoquinol + NADP(+) + n H(+)(out). NDH-1 shuttles electrons from an unknown electron donor, via FMN and iron-sulfur (Fe-S) centers, to quinones in the respiratory and/or the photosynthetic chain. The immediate electron acceptor for the enzyme in this species is believed to be plastoquinone. Couples the redox reaction to proton translocation, and thus conserves the redox energy in a proton gradient. Cyanobacterial NDH-1 also plays a role in inorganic carbon-concentration. The chain is NAD(P)H-quinone oxidoreductase subunit 3 from Acaryochloris marina (strain MBIC 11017).